Consider the following 327-residue polypeptide: Zinc transport protein ZntB (327 aa).

Over 1-273 (MEAIKGSDVN…ARRTYTMSLM (273 aa)) the chain is Cytoplasmic. A helical transmembrane segment spans residues 274–294 (AMVFLPSTFLTGLFGVNLGGI). Over 295-300 (PGGGWQ) the chain is Periplasmic. A helical membrane pass occupies residues 301 to 321 (FGFSIFCILLVVLIGGVALWL). At 322-327 (HRSKWL) the chain is on the cytoplasmic side.

The protein belongs to the CorA metal ion transporter (MIT) (TC 1.A.35) family.

It localises to the cell inner membrane. It carries out the reaction Zn(2+)(out) + H(+)(out) = Zn(2+)(in) + H(+)(in). Zinc transporter. Acts as a Zn(2+):proton symporter, which likely mediates zinc ion uptake. In Escherichia coli O8 (strain IAI1), this protein is Zinc transport protein ZntB.